The primary structure comprises 321 residues: MIYVLAIIAFLITLILVPILIPTLKRMKFGQSIREEGPQSHMKKTGTPTMGGLTFLISIIITTIIAIIFSDNANPYILLLFVTVGFGLIGFVDDYIIVVKKNNQGLTSKQKFLAQIAIAVIFFILSDVFNMIHFATGIHIPFTNVSIPLSVVYVVFIVFWQVGFSNAVNLTDGLDGLATGLSIIAFAMYAIMSFMLGNNAVGTFCIIMVFALLGFLIYNVNPAKVFMGDTGSLALGGIIATVSIMLNAEISLIFIGFVFVAETLSVILQVASFKLTGKRIFKMSPLHHHFELSGWNEWKVVSVFWIVGLITGLIGLWIGVH.

The next 10 helical transmembrane spans lie at 1-21 (MIYV…PILI), 49-69 (TMGG…AIIF), 77-97 (ILLL…DYII), 112-132 (FLAQ…FNMI), 140-160 (IPFT…IVFW), 176-196 (GLAT…SFML), 200-220 (AVGT…IYNV), 225-245 (VFMG…VSIM), 250-270 (ISLI…ILQV), and 300-320 (VVSV…WIGV).

The protein belongs to the glycosyltransferase 4 family. MraY subfamily. The cofactor is Mg(2+).

The protein resides in the cell membrane. It carries out the reaction UDP-N-acetyl-alpha-D-muramoyl-L-alanyl-gamma-D-glutamyl-L-lysyl-D-alanyl-D-alanine + di-trans,octa-cis-undecaprenyl phosphate = Mur2Ac(oyl-L-Ala-gamma-D-Glu-L-Lys-D-Ala-D-Ala)-di-trans,octa-cis-undecaprenyl diphosphate + UMP. The protein operates within cell wall biogenesis; peptidoglycan biosynthesis. Functionally, catalyzes the initial step of the lipid cycle reactions in the biosynthesis of the cell wall peptidoglycan: transfers peptidoglycan precursor phospho-MurNAc-pentapeptide from UDP-MurNAc-pentapeptide onto the lipid carrier undecaprenyl phosphate, yielding undecaprenyl-pyrophosphoryl-MurNAc-pentapeptide, known as lipid I. The sequence is that of Phospho-N-acetylmuramoyl-pentapeptide-transferase from Staphylococcus carnosus (strain TM300).